The following is a 514-amino-acid chain: ATP synthase subunit alpha (514 aa).

170–177 serves as a coordination point for ATP; that stretch reads GDRQIGKT.

It belongs to the ATPase alpha/beta chains family. In terms of assembly, F-type ATPases have 2 components, CF(1) - the catalytic core - and CF(0) - the membrane proton channel. CF(1) has five subunits: alpha(3), beta(3), gamma(1), delta(1), epsilon(1). CF(0) has three main subunits: a(1), b(2) and c(9-12). The alpha and beta chains form an alternating ring which encloses part of the gamma chain. CF(1) is attached to CF(0) by a central stalk formed by the gamma and epsilon chains, while a peripheral stalk is formed by the delta and b chains.

It is found in the cell inner membrane. The catalysed reaction is ATP + H2O + 4 H(+)(in) = ADP + phosphate + 5 H(+)(out). Produces ATP from ADP in the presence of a proton gradient across the membrane. The alpha chain is a regulatory subunit. The chain is ATP synthase subunit alpha from Pseudomonas savastanoi pv. phaseolicola (strain 1448A / Race 6) (Pseudomonas syringae pv. phaseolicola (strain 1448A / Race 6)).